We begin with the raw amino-acid sequence, 416 residues long: Gamma-glutamyl phosphate reductase (416 aa).

This sequence belongs to the gamma-glutamyl phosphate reductase family.

Its subcellular location is the cytoplasm. The enzyme catalyses L-glutamate 5-semialdehyde + phosphate + NADP(+) = L-glutamyl 5-phosphate + NADPH + H(+). The protein operates within amino-acid biosynthesis; L-proline biosynthesis; L-glutamate 5-semialdehyde from L-glutamate: step 2/2. Its function is as follows. Catalyzes the NADPH-dependent reduction of L-glutamate 5-phosphate into L-glutamate 5-semialdehyde and phosphate. The product spontaneously undergoes cyclization to form 1-pyrroline-5-carboxylate. The polypeptide is Gamma-glutamyl phosphate reductase (Salmonella heidelberg (strain SL476)).